A 188-amino-acid polypeptide reads, in one-letter code: Large ribosomal subunit protein eL18B (188 aa).

The tract at residues 153 to 188 (GKAPGTPHSRTKPYVLSKGRKFERARGRRASRGYKN) is disordered. Residues 178–188 (RGRRASRGYKN) show a composition bias toward basic residues.

The protein belongs to the eukaryotic ribosomal protein eL18 family. In terms of assembly, component of the large ribosomal subunit.

It is found in the cytoplasm. The protein resides in the cytosol. The protein localises to the rough endoplasmic reticulum. Functionally, component of the large ribosomal subunit. The ribosome is a large ribonucleoprotein complex responsible for the synthesis of proteins in the cell. The chain is Large ribosomal subunit protein eL18B (rpl18-b) from Xenopus laevis (African clawed frog).